Consider the following 337-residue polypeptide: Oligopeptide transport ATP-binding protein OppD (337 aa).

In terms of domain architecture, ABC transporter spans 20–269; it reads LNVKDLRVTF…PVHPYSIGLL (250 aa). 56–63 serves as a coordination point for ATP; it reads GESGSGKS.

This sequence belongs to the ABC transporter superfamily. In terms of assembly, the complex is composed of two ATP-binding proteins (OppD and OppF), two transmembrane proteins (OppB and OppC) and a solute-binding protein (OppA or MppA).

It localises to the cell inner membrane. It carries out the reaction a [peptide](out) + ATP + H2O = a [peptide](in) + ADP + phosphate + H(+). The enzyme catalyses L-alanyl-gamma-D-glutamyl-meso-2,6-diaminopimelate(out) + ATP + H2O = L-alanyl-gamma-D-glutamyl-meso-2,6-diaminopimelate(in) + ADP + phosphate + H(+). Part of the ABC transporter complex OppABCDF involved in the uptake of oligopeptides and of the ABC transporter complex MppA-OppBCDF involved in the uptake of the cell wall murein tripeptide L-alanyl-gamma-D-glutamyl-meso-diaminopimelate. Probably responsible for energy coupling to the transport system. Plays an important nutritional role and is involved in the recycling of cell wall peptides. This chain is Oligopeptide transport ATP-binding protein OppD (oppD), found in Escherichia coli (strain K12).